A 173-amino-acid chain; its full sequence is CKLF-like MARVEL transmembrane domain-containing protein 8 (173 aa).

The MARVEL domain occupies 36–168; the sequence is FLRTLPGFLI…NTYFSFIAWR (133 aa). Helical transmembrane passes span 40–60, 70–90, 105–125, and 147–167; these read LPGF…TLIA, FGWV…FLII, TTVG…AAVV, and FFAF…FIAW.

It belongs to the chemokine-like factor family. As to expression, highly expressed in liver and pancreas.

It is found in the membrane. The protein localises to the cytoplasm. The protein resides in the nucleus. The protein is CKLF-like MARVEL transmembrane domain-containing protein 8 (CMTM8) of Homo sapiens (Human).